The sequence spans 2725 residues: Teneurin-1 (2725 aa).

The disordered stretch occupies residues 1-48 (MEQTDCKPYQPLPKVKHEMDLAYTSSSDESEDGRKPRQSYNSRETLHE). The Teneurin N-terminal domain occupies 1 to 318 (MEQTDCKPYQ…KPYRCCNWKC (318 aa)). Topologically, residues 1–324 (MEQTDCKPYQ…NWKCTALSAT (324 aa)) are cytoplasmic. The Nuclear localization signal (NLS) motif lies at 62 to 65 (RKRK). At S105 the chain carries Phosphoserine. T109 bears the Phosphothreonine mark. S116 carries the phosphoserine modification. Positions 174–189 (AGSTQDVQSSPHNQFT) are enriched in polar residues. A disordered region spans residues 174–241 (AGSTQDVQSS…PAPPTSTQDS (68 aa)). Positions 192 to 201 (PLPPPPPPPH) are enriched in pro residues. Residues 290–297 (PPPRPLPR) carry the Required for interaction with SORBS1 (Ten-1 ICD form) motif. A helical membrane pass occupies residues 325-345 (AITVTLALLLAYVIAVHLFGL). The Extracellular portion of the chain corresponds to 346 to 2725 (TWQLQPVEGE…FMRQSEIGRR (2380 aa)). N433 is a glycosylation site (N-linked (GlcNAc...) asparagine). EGF-like domains follow at residues 528-559 (IMDDCSTNCNGNGECISGHCHCFPGFLGPDCA), 560-591 (RDSCPVLCGGNGEYEKGHCVCRHGWKGPECDV), 592-624 (PEEQCIDPTCFGHGTCIMGVCICVPGYKGEICE), 625-657 (EEDCLDPMCSNHGICVKGECHCSTGWGGVNCET), 658-691 (PLPVCQEQCSGHGTFLLDAGVCSCDPKWTGSDCS), 692-721 (TELCTMECGSHGVCSRGICQCEEGWVGPTC), 722-753 (EERSCHSHCTEHGQCKDGKCECSPGWEGDHCT), and 761-796 (VRDGCPGLCFGNGRCTLDQNGWHCVCQVGWSGTGCN). 22 disulfide bridges follow: C532/C542, C536/C547, C549/C558, C567/C578, C580/C589, C596/C607, C601/C612, C614/C623, C628/C639, C633/C644, C646/C655, C666/C679, C681/C690, C695/C705, C699/C710, C712/C721, C726/C736, C730/C741, C743/C752, C765/C775, C769/C784, and C786/C795. N-linked (GlcNAc...) asparagine glycosylation is found at N905 and N1084. 5 NHL repeats span residues 1194 to 1219 (LFAPVALASGPDGSVYVGDFNFVRRI), 1292 to 1336 (SHCG…NAVI), 1351 to 1402 (LSCD…IAGR), 1414 to 1458 (FLVS…VTTN), and 1481 to 1524 (CFSG…ISRN). A YD 1 repeat occupies 1534–1553 (YEIASPADQELYQFTVNGTH). N1550 and N1567 each carry an N-linked (GlcNAc...) asparagine glycan. 4 YD repeats span residues 1570-1590 (YNSEGDLGAITSSNGNSVHIR), 1608-1632 (YWLTISSNGVLKRVSAQGYNLALMT), 1633-1654 (YPGNTGLLATKSNENGWTTVYE), and 1655-1675 (YDPEGHLTNATFPTGEVSSFH). N-linked (GlcNAc...) asparagine glycosylation is found at N1663, N1699, N1757, N1781, and N1842. YD repeat units lie at residues 1845–1864 (YSPSGLVTFIQRGTWNEKME), 1865–1885 (YDQSGKIISRTWADGKIWSYT), 1886–1904 (YLEKSVMLLLHSQRRYIFE), 1905–1925 (YDQPDCLLSVTMPSMVRHSLQ), 1933–1949 (YRNIYTPPDSSTSFIQD), 1950–1969 (YSRDGRLLQTLHLGTGRRVL), 1970–1989 (YKYTKQARLSEVLYDTTQVT), 1992–2012 (YEESSGVIKTIHLMHDGFICT), 2015–2035 (YRQTGPLIGRQIFRFSEEGLV), 2085–2105 (YDLNQVITTTVMKHTKIFSAN), and 2113–2133 (YEILKAIAYWMTIQYDNVGRM). Residue N2145 is glycosylated (N-linked (GlcNAc...) asparagine). 5 YD repeats span residues 2153-2173 (YDADGQLQTVSVNDKTQWRYS), 2174-2194 (YDLNGNINLLSHGKSARLTPL), 2196-2216 (YDLRDRITRLGEIQYKMDEDG), 2228-2248 (YNSNGLLQKAYNKASGWTVQY), and 2250-2270 (YDGLGRRVASKSSLGQHLQFF). The N-linked (GlcNAc...) asparagine glycan is linked to N2285. YD repeat units lie at residues 2296–2313 (YDLQGHLIAMELSSGEEY) and 2314–2337 (YVACDNTGTPLAVFSSRGQVIKEI). S2580 is subject to Phosphoserine. N-linked (GlcNAc...) asparagine glycosylation is present at N2602.

The protein belongs to the tenascin family. Teneurin subfamily. In terms of assembly, homodimer; disulfide-linked. Heterodimer with either TENM2 or TENM3. May also form heterodimer with TENM4. Ten-1 ICD interacts with SORBS1 (via third SH3 domain). Interacts with MBD1. Ten-1 ICD interacts with HINT1. Post-translationally, derives from the plasma membrane form by proteolytic processing. Further proteolytic cleavage may be generated. Expressed in fetal brain.

It is found in the cell membrane. It localises to the nucleus. Its subcellular location is the nucleus speckle. The protein resides in the nucleus matrix. The protein localises to the cytoplasm. It is found in the cytoskeleton. Its function is as follows. Involved in neural development, regulating the establishment of proper connectivity within the nervous system. May function as a cellular signal transducer. Plays a role in the regulation of neuroplasticity in the limbic system. Mediates a rapid reorganization of actin- and tubulin-based cytoskeleton elements with an increase in dendritic arborization and spine density formation of neurons in the hippocampus and amygdala. Induces BDNF transcription inhibition in neurons. Activates the mitogen-activated protein (MAP) kinase 2 (MEK2) and extracellular signal-regulated kinase (ERK) cascade. Also acts as a bioactive neuroprotective peptide on limbic neurons of the brain and regulates stress-induced behavior: attenuates alkalosis-associated necrotic cell death and the effects of corticotropin-releasing factor (CRF) on c-fos/FOS induction and on the reinstatement of cocaine seeking. In terms of biological role, induces gene transcription activation. The polypeptide is Teneurin-1 (TENM1) (Homo sapiens (Human)).